We begin with the raw amino-acid sequence, 484 residues long: Glycogen synthase (484 aa).

Lys21 contributes to the ADP-alpha-D-glucose binding site.

Belongs to the glycosyltransferase 1 family. Bacterial/plant glycogen synthase subfamily.

It catalyses the reaction [(1-&gt;4)-alpha-D-glucosyl](n) + ADP-alpha-D-glucose = [(1-&gt;4)-alpha-D-glucosyl](n+1) + ADP + H(+). Its pathway is glycan biosynthesis; glycogen biosynthesis. Its function is as follows. Synthesizes alpha-1,4-glucan chains using ADP-glucose. The protein is Glycogen synthase of Pseudomonas syringae pv. tomato (strain ATCC BAA-871 / DC3000).